The sequence spans 379 residues: Zinc finger protein 883 (379 aa).

13 C2H2-type zinc fingers span residues 13 to 35, 41 to 63, 69 to 91, 97 to 119, 125 to 147, 153 to 175, 181 to 203, 209 to 231, 237 to 259, 265 to 287, 293 to 315, 321 to 343, and 349 to 371; these read YLCTECGKGYTCLASLTQHQKTH, YECKICGKSFTRNSNLVQHQRIH, YECNECGKAFSQSTNLIQHQRVH, YECNECEKTFSHRSSLRNHERIH, YPCNECGKAFSHISALTQHHRIH, YECTECGKTFSRSTHLIEHQGIH, YQCKQCRKVFCHSTSLIRHQRTH, YECNECGKAFSHTPAFIQHQRIH, YECNACGKAFNRSAHLTEHQRTH, YVCKECGKTFSRSTHLTEHLKIH, YQCNECQKLFCYRTSLIRHQRTH, YQCNECGKSFSLSSALTKHKRIH, and YQCTKCGDVFCHSTSLIRHQKTH.

The protein belongs to the krueppel C2H2-type zinc-finger protein family.

The protein localises to the nucleus. Functionally, may be involved in transcriptional regulation. The protein is Zinc finger protein 883 (ZNF883) of Homo sapiens (Human).